We begin with the raw amino-acid sequence, 555 residues long: Formate--tetrahydrofolate ligase (555 aa).

65 to 72 (TPAGEGKS) contributes to the ATP binding site.

This sequence belongs to the formate--tetrahydrofolate ligase family.

The enzyme catalyses (6S)-5,6,7,8-tetrahydrofolate + formate + ATP = (6R)-10-formyltetrahydrofolate + ADP + phosphate. It participates in one-carbon metabolism; tetrahydrofolate interconversion. The polypeptide is Formate--tetrahydrofolate ligase (Staphylococcus aureus (strain Mu3 / ATCC 700698)).